A 253-amino-acid polypeptide reads, in one-letter code: Imidazole glycerol phosphate synthase subunit HisF (253 aa).

Active-site residues include aspartate 11 and aspartate 130.

The protein belongs to the HisA/HisF family. In terms of assembly, heterodimer of HisH and HisF.

It localises to the cytoplasm. It carries out the reaction 5-[(5-phospho-1-deoxy-D-ribulos-1-ylimino)methylamino]-1-(5-phospho-beta-D-ribosyl)imidazole-4-carboxamide + L-glutamine = D-erythro-1-(imidazol-4-yl)glycerol 3-phosphate + 5-amino-1-(5-phospho-beta-D-ribosyl)imidazole-4-carboxamide + L-glutamate + H(+). Its pathway is amino-acid biosynthesis; L-histidine biosynthesis; L-histidine from 5-phospho-alpha-D-ribose 1-diphosphate: step 5/9. Functionally, IGPS catalyzes the conversion of PRFAR and glutamine to IGP, AICAR and glutamate. The HisF subunit catalyzes the cyclization activity that produces IGP and AICAR from PRFAR using the ammonia provided by the HisH subunit. In Acetivibrio thermocellus (strain ATCC 27405 / DSM 1237 / JCM 9322 / NBRC 103400 / NCIMB 10682 / NRRL B-4536 / VPI 7372) (Clostridium thermocellum), this protein is Imidazole glycerol phosphate synthase subunit HisF.